The following is a 356-amino-acid chain: Uroporphyrinogen decarboxylase (356 aa).

Residues 27–31 (RQAGR), Asp-77, Tyr-154, Ser-209, and His-327 contribute to the substrate site.

The protein belongs to the uroporphyrinogen decarboxylase family. Homodimer.

It is found in the cytoplasm. It carries out the reaction uroporphyrinogen III + 4 H(+) = coproporphyrinogen III + 4 CO2. The protein operates within porphyrin-containing compound metabolism; protoporphyrin-IX biosynthesis; coproporphyrinogen-III from 5-aminolevulinate: step 4/4. Functionally, catalyzes the decarboxylation of four acetate groups of uroporphyrinogen-III to yield coproporphyrinogen-III. The sequence is that of Uroporphyrinogen decarboxylase from Aromatoleum aromaticum (strain DSM 19018 / LMG 30748 / EbN1) (Azoarcus sp. (strain EbN1)).